Reading from the N-terminus, the 70-residue chain is Probable U6 snRNA-associated Sm-like protein (70 aa).

One can recognise a Sm domain in the interval 3–70; sequence DPFCFLKMYL…ILFVGPRLLL (68 aa).

Belongs to the snRNP Sm proteins family.

It localises to the nucleus. In terms of biological role, binds specifically to the 3'-terminal U-tract of U6 snRNA. This is Probable U6 snRNA-associated Sm-like protein from Encephalitozoon cuniculi (strain GB-M1) (Microsporidian parasite).